Consider the following 433-residue polypeptide: Voltage-gated potassium channel regulatory subunit KCNG3 (433 aa).

At 1-165 (MTFGRGGAAS…RTFEEPTSSL (165 aa)) the chain is on the cytoplasmic side. Residues 166-187 (AAQILASVSVVFVIVSMVVLCA) traverse the membrane as a helical segment. At 188 to 217 (STLPDWRAAVADNRSLDDRSRYSASPGREP) the chain is on the extracellular side. Residues 218–239 (SGIIEAICIGWFTAECIVRFIV) form a helical membrane-spanning segment. Topologically, residues 240–250 (SKNKCEFVKRP) are cytoplasmic. Residues 251–271 (LNIIDLLAITPYYISVLMTVF) traverse the membrane as a helical segment. At 272–281 (TGENSQLQRA) the chain is on the extracellular side. Residues 282–302 (GVTLRVLRMMRIFWVIKLARH) form a helical; Voltage-sensor membrane-spanning segment. Residues 303–317 (FIGLQTLGLTLKRCY) lie on the Cytoplasmic side of the membrane. A helical membrane pass occupies residues 318 to 339 (REMAMLLVFICVAMAIFSALSQ). The Extracellular portion of the chain corresponds to 340-357 (LLEHGLDLETSNKDFASI). The segment at residues 358–369 (PAACWWVIISMT) is an intramembrane region (helical). Positions 370–375 (TVGYGD) match the Selectivity filter motif. The stretch at 370 to 377 (TVGYGDMY) is an intramembrane region. Residues 378 to 384 (PITVPGR) lie on the Extracellular side of the membrane. A helical membrane pass occupies residues 385-413 (ILGGVCVVSGIVLLALPITFIYHSFVQCY). Over 414–433 (HELKFRSARYSRSLSAEFLN) the chain is Cytoplasmic.

It belongs to the potassium channel family. G (TC 1.A.1.2) subfamily. Kv6.3/KCNG3 sub-subfamily. In terms of assembly, heterotetramer with KCNB1. Does not form homomultimers.

The protein resides in the cell membrane. Its subcellular location is the cytoplasm. Its function is as follows. Regulatory subunit of the voltage-gated potassium (Kv) channel which, when coassembled with KCNB1, modulates the kinetics parameters of the heterotetrameric channel namely the inactivation and deactivation rate. Potassium channel subunit that does not form functional channels by itself. Reduces the deactivation rate. Moderately acceleratee activation. This Mus musculus (Mouse) protein is Voltage-gated potassium channel regulatory subunit KCNG3.